The following is a 436-amino-acid chain: 3-hydroxy-3-methylglutaryl-coenzyme A reductase (436 aa).

Catalysis depends on charge relay system residues E99, K277, and D293. The active-site Proton donor is the H390.

This sequence belongs to the HMG-CoA reductase family.

The enzyme catalyses (R)-mevalonate + 2 NADP(+) + CoA = (3S)-3-hydroxy-3-methylglutaryl-CoA + 2 NADPH + 2 H(+). It functions in the pathway metabolic intermediate biosynthesis; (R)-mevalonate biosynthesis; (R)-mevalonate from acetyl-CoA: step 3/3. Its function is as follows. Converts HMG-CoA to mevalonate. The sequence is that of 3-hydroxy-3-methylglutaryl-coenzyme A reductase (hmgA) from Archaeoglobus fulgidus (strain ATCC 49558 / DSM 4304 / JCM 9628 / NBRC 100126 / VC-16).